A 232-amino-acid polypeptide reads, in one-letter code: Heptaprenylglyceryl phosphate synthase (232 aa).

Lysine 12 contacts sn-glycerol 1-phosphate. Positions 14 and 40 each coordinate Mg(2+). Residues tyrosine 159 to glycine 164, glycine 189, and glycine 209 to asparagine 210 each bind sn-glycerol 1-phosphate.

This sequence belongs to the GGGP/HepGP synthase family. Group I subfamily. As to quaternary structure, homodimer. The cofactor is Mg(2+).

The enzyme catalyses sn-glycerol 1-phosphate + all-trans-heptaprenyl diphosphate = 3-heptaprenyl-sn-glycero-1-phosphate + diphosphate. It functions in the pathway membrane lipid metabolism; glycerophospholipid metabolism. Its function is as follows. Prenyltransferase that catalyzes in vivo the transfer of the heptaprenyl moiety of heptaprenyl pyrophosphate (HepPP; 35 carbon atoms) to the C3 hydroxyl of sn-glycerol-1-phosphate (G1P), producing heptaprenylglyceryl phosphate (HepGP). This reaction is an ether-bond-formation step in the biosynthesis of archaea-type G1P-based membrane lipids found in Bacillales. In Shouchella clausii (strain KSM-K16) (Alkalihalobacillus clausii), this protein is Heptaprenylglyceryl phosphate synthase.